A 57-amino-acid polypeptide reads, in one-letter code: DELTA-limacoditoxin(2)-Dv11 (57 aa).

Positions 1–24 (MKFAKTFLLLFVVLLLLSIVMAEP) are cleaved as a signal peptide.

The protein belongs to the limacoditoxin-2 (cecropin-like) family. In terms of tissue distribution, expressed by the venom secretory cell of the spine. The spine is a cuticular structure containing a single large nucleated venom-secreting cell at its base. It is an independent unit capable of producing, storing and injecting venom. On the back of D.vulnerans caterpillars, spines are grouped together by 50 to 100 to form scoli, of which there are eight in D.vulnerans.

The protein localises to the secreted. In terms of biological role, peptide that induces pain in mammals and has insecticidal, antibacterial and antiparasitic activities. Induces partially reversible paralysis in D.melanogaster when tested at high doses. Shows a moderate antiparasitic activity against the major pathogenic nematode of ruminants (H.contortus, EC(50)=30.5 uM). Has potent or moderate antibacterial activities against A.baumannii (MIC&lt;0.25 ug/mL) and S.aureus (MIC=16 ug/mL). Has no activity on the other bacteria tested, nor on the fungus C.albicans. Strongly induces the increase of intracellular calcium in mice DRG neurons, which is a proxy for neuronal activation that would occur during nociception. This increase is due to influx of extracellular calcium, suggesting that the peptide forms pore or channel in neuronal cell membranes. In addition, intraplantar injection in mice provokes nocifensive behavior, suggesting a pain-inducing activity. The chain is DELTA-limacoditoxin(2)-Dv11 from Doratifera vulnerans (Mottled cup moth).